Here is a 276-residue protein sequence, read N- to C-terminus: 5'-nucleotidase SurE (276 aa).

4 residues coordinate a divalent metal cation: aspartate 14, aspartate 15, serine 46, and asparagine 104.

Belongs to the SurE nucleotidase family. It depends on a divalent metal cation as a cofactor.

The protein resides in the cytoplasm. It carries out the reaction a ribonucleoside 5'-phosphate + H2O = a ribonucleoside + phosphate. Its function is as follows. Nucleotidase that shows phosphatase activity on nucleoside 5'-monophosphates. This chain is 5'-nucleotidase SurE, found in Crocosphaera subtropica (strain ATCC 51142 / BH68) (Cyanothece sp. (strain ATCC 51142)).